The sequence spans 1423 residues: MATQVLIAHTGQRLEVDTAQFSHLDDFKAWVGRNTPVAPKHFVALTPQGRTVKHASLYAEACCPSQKEIYIYDIRMSQAPSSDGSPSVVSQVPPPKRYSIPNAPNSIENVQAIASWQELYKQRRAWAVHLLEDCSAMDATARARFEEMDVMIKCVDAAVANLELSIKQIEPKYTELKKWVEPALEEHARLSTSWQQYLALARNTPVSPSMVKFMTRGQASKSNATLEDLIEPDTAKKAGTLAPTAHRRFNDKATELDRAAKKMYQTLDALIADFDKLMSRSVLGRSDESTQLLQDIEAVVKQIDSDYRTALSYSGSQKDVAQASKTASNHTERLVPNLKKRAKEMDDLLQYVTTSRNTVASDAVEFMRAITEITSLRGKLKDNIGILNQSEDDMTTFDYLRLIQQLPYMYASFLVEAIRRQEWNEKIKADSSTLANEMALFQDEEAKRRRRWQKMVGSTYGPGLDTNVIGLEVSVLGDDNSWPSVNKDELVAFLAALKDQETEEAILEDVGRLIQELNSPTKQQSKRLKAFKNGSVHEAALGRSGLMIRGDDELLRSLQDDKSKLESKLKTAESRVRRLEDLLHRQSQASRPGNLFQPQTNSIHERNDSASSVKAAPTDRQRASSEGTDTLLRRISELENELREEKQRSSRIQNDLSNRATQHDDMKNQIREVNSTKKDLLENMEALKREFVLERKSLEDEIKTLKARLEDTEDEMEHFGESREKERTSYEERAQQLEAELERIDKERRDEMLKAQGQVDFLRNENRIQREQRDTLERELQNTKDAGHATSKRLEALQEAADAHLQSLKELHSQLTGNDPVPDDGDLADVIQTKAADLLARLQNMESDTSLIRGDLDRTRDQVKELREELASTKDKLATEEAASIHVRECVSEEKAKVKALEHELAETREQLSRARARLADGETGSETLQKRVEEEEKKVASLSEELASRQSQVGSLEEELHLYKEKQEAACARASELTQRHETRDERSKELTQRLYSQNDRLCHLLERLGYAVSRKEGTMTITKVPRAERAAQNPNDSSDPGTSLRKSGMLGAKALHESADLDLLYWWNSADAATETEKYAAFMSKLGDFDADLFADTIYHRIKEVEHKARKWQKEARSYRDRAHIAQKDAHDKIAFRHFKEGDLALFLPTRNQQAGAWAAFNVGFPHYFLREQDSHRLRHREWLVARINRIQERVVDLSKSLQANDSASINDEENDNPFQLSDGLRWYLIDAQEDKPGAPATPGMGKSTVAANNVEATANIHTHMAGAKGKNRDSVHSIEGINKTLSKSLESRRSSSSSKRALPFAGAGAQALLKSNPIASETNSLRAAAPETPVATSPVQGGLLSTGEGGRPQPGAAGSSSARRPNDGPGEASGNGDAAKTAEPRRMLDRQESTGSPTKKSVVWDPLWSVDYTYESPGKK.

2 coiled-coil regions span residues 551–589 and 625–978; these read DDELLRSLQDDKSKLESKLKTAESRVRRLEDLLHRQSQA and SEGT…ASEL. Disordered stretches follow at residues 583-660 and 1028-1048; these read LHRQ…SNRA and RAERAAQNPNDSSDPGTSLRK. Polar residues predominate over residues 585 to 602; sequence RQSQASRPGNLFQPQTNS. The segment covering 631-648 has biased composition (basic and acidic residues); the sequence is LLRRISELENELREEKQR. Polar residues-rich tracts occupy residues 650 to 660 and 1034 to 1047; these read SRIQNDLSNRA and QNPNDSSDPGTSLR. Residues 1102–1130 are a coiled coil; it reads HRIKEVEHKARKWQKEARSYRDRAHIAQK. Residues 1327-1423 are disordered; it reads SLRAAAPETP…DYTYESPGKK (97 aa). Residues 1383 to 1395 show a composition bias toward basic and acidic residues; the sequence is KTAEPRRMLDRQE.

This sequence belongs to the ATG11 family. Homodimer and potential homooligomers. Interacts with ATG1 kinase and the ATG19 and ATG34 cargo protein transporters. Interacts with ATG9, ATG17 and ATG20.

The protein localises to the preautophagosomal structure membrane. The protein resides in the vacuole membrane. Its function is as follows. Involved in cytoplasm to vacuole transport (Cvt), pexophagy, mitophagy and nucleophagy. Recruits mitochondria for their selective degradation via autophagy (mitophagy) during starvation, through its interaction with ATG32. Works as scaffold proteins that recruit ATG proteins to the pre-autophagosome (PAS), the site of vesicle/autophagosome formation. Required for ATG9 anterograde transport from the mitochondria to the PAS. Also recruits the ATG19-prAPE1 complex to the PAS. Required for the Cvt vesicles completion. Plays a role in morphological differentiation and cephalosporin production. The sequence is that of Autophagy-related protein 11 from Hapsidospora chrysogena (Acremonium chrysogenum).